Here is a 583-residue protein sequence, read N- to C-terminus: 2-succinyl-5-enolpyruvyl-6-hydroxy-3-cyclohexene-1-carboxylate synthase (583 aa).

This sequence belongs to the TPP enzyme family. MenD subfamily. In terms of assembly, homodimer. Mg(2+) serves as cofactor. Requires Mn(2+) as cofactor. It depends on thiamine diphosphate as a cofactor.

It carries out the reaction isochorismate + 2-oxoglutarate + H(+) = 5-enolpyruvoyl-6-hydroxy-2-succinyl-cyclohex-3-ene-1-carboxylate + CO2. It functions in the pathway quinol/quinone metabolism; 1,4-dihydroxy-2-naphthoate biosynthesis; 1,4-dihydroxy-2-naphthoate from chorismate: step 2/7. Its pathway is quinol/quinone metabolism; menaquinone biosynthesis. Catalyzes the thiamine diphosphate-dependent decarboxylation of 2-oxoglutarate and the subsequent addition of the resulting succinic semialdehyde-thiamine pyrophosphate anion to isochorismate to yield 2-succinyl-5-enolpyruvyl-6-hydroxy-3-cyclohexene-1-carboxylate (SEPHCHC). This chain is 2-succinyl-5-enolpyruvyl-6-hydroxy-3-cyclohexene-1-carboxylate synthase, found in Chlorobaculum parvum (strain DSM 263 / NCIMB 8327) (Chlorobium vibrioforme subsp. thiosulfatophilum).